The sequence spans 289 residues: MNTLIPSEKRWIITGVLLAGLVGGALLFTSFIRAADETLFLCSTASAKSRAVAAAADYEATPIQLQAIVHYATSNVVPQQNLAEISISFNILKKLAPANFLVFGLGRDSLMWASLNPRGKTLFLEEDLEWFQKVTKDSPFLRAHHVRYRTQLQQADSLLRSYKTEPKCFPAKSYLRGNEKCKLALTGLPDEFYDTEWDLLMVDAPKGYFAEAPGRMAAIFSAAVMARNRKKPGVTHVFLHDVNRRVEKTFAEEFLCRKYRVNAAGRLWHFAIPPAAANATIDSGDYRFC.

Residues 12 to 32 (IITGVLLAGLVGGALLFTSFI) form a helical membrane-spanning segment.

It belongs to the methyltransferase superfamily. As to quaternary structure, binds to the translation initiation factors TIF3E1.

It is found in the golgi apparatus membrane. Functionally, involved in the methylation of glucuronic acid of different plant cell wall component, but mainly on side chains of arabinogalactans. The protein is Arabinogalactan O-methyltransferase 1 (AGM1) of Arabidopsis thaliana (Mouse-ear cress).